A 282-amino-acid chain; its full sequence is NAD(P)H-hydrate epimerase (282 aa).

The transit peptide at 1–53 directs the protein to the mitochondrion; it reads MSGLRTLLGLGLLVAGSRLPRVISQQSVCRARPIWWGTQRRGSETMAGAAVKY. Phosphoserine; by PKA is present on serine 43. The region spanning 59 to 269 is the YjeF N-terminal domain; it reads AQAVDQELFN…ALEKKYQLNL (211 aa). 113 to 117 lines the (6S)-NADPHX pocket; that stretch reads NNGGD. Asparagine 114 lines the K(+) pocket. Lysine 138 carries the N6-succinyllysine modification. Aspartate 179 lines the K(+) pocket. Residues 183–189 and aspartate 212 contribute to the (6S)-NADPHX site; that span reads GFSFKGD. Serine 215 provides a ligand contact to K(+).

Belongs to the NnrE/AIBP family. Homodimer. Interacts with APOA1 and APOA2. K(+) serves as cofactor. Undergoes physiological phosphorylation during sperm capacitation, downstream to PKA activation. In terms of tissue distribution, detected in testis and sperm (at protein level). Expressed at high levels in heart, liver, kidney, and testis.

It is found in the mitochondrion. It localises to the secreted. The catalysed reaction is (6R)-NADHX = (6S)-NADHX. It carries out the reaction (6R)-NADPHX = (6S)-NADPHX. Catalyzes the epimerization of the S- and R-forms of NAD(P)HX, a damaged form of NAD(P)H that is a result of enzymatic or heat-dependent hydration. This is a prerequisite for the S-specific NAD(P)H-hydrate dehydratase to allow the repair of both epimers of NAD(P)HX. Accelerates cholesterol efflux from endothelial cells to high-density lipoprotein (HDL) and thereby regulates angiogenesis. The polypeptide is NAD(P)H-hydrate epimerase (Mus musculus (Mouse)).